We begin with the raw amino-acid sequence, 48 residues long: DNA gyrase inhibitor YacG (48 aa).

Residues cysteine 9, cysteine 12, cysteine 28, and cysteine 32 each coordinate Zn(2+).

Belongs to the DNA gyrase inhibitor YacG family. In terms of assembly, interacts with GyrB. Zn(2+) serves as cofactor.

Inhibits all the catalytic activities of DNA gyrase by preventing its interaction with DNA. Acts by binding directly to the C-terminal domain of GyrB, which probably disrupts DNA binding by the gyrase. In Wigglesworthia glossinidia brevipalpis, this protein is DNA gyrase inhibitor YacG.